Reading from the N-terminus, the 316-residue chain is Protoheme IX farnesyltransferase (316 aa).

The next 8 helical transmembrane spans lie at 35–55, 56–76, 119–139, 156–176, 183–203, 229–246, 250–272, and 283–303; these read VMVLVIFTALVGMVVSQGHVQ, PAIGAISLLAIAVGAGASGCL, VVLGLAANLLAAALLAFTIVF, IVIGGAAGALPPVIGQAVVTG, LILFAIIFIWTPPHFWALALI, IVWYSLLLAPLGLVPVAL, GLVYAVVGLVGGLGMVAFSIRVL, and AAMGMFGFSILYLFALFSALL.

Belongs to the UbiA prenyltransferase family. Protoheme IX farnesyltransferase subfamily.

Its subcellular location is the cell inner membrane. The enzyme catalyses heme b + (2E,6E)-farnesyl diphosphate + H2O = Fe(II)-heme o + diphosphate. The protein operates within porphyrin-containing compound metabolism; heme O biosynthesis; heme O from protoheme: step 1/1. Converts heme B (protoheme IX) to heme O by substitution of the vinyl group on carbon 2 of heme B porphyrin ring with a hydroxyethyl farnesyl side group. This chain is Protoheme IX farnesyltransferase, found in Methylobacterium radiotolerans (strain ATCC 27329 / DSM 1819 / JCM 2831 / NBRC 15690 / NCIMB 10815 / 0-1).